The sequence spans 77 residues: Conotoxin ArMSGL-0141 (77 aa).

An N-terminal signal peptide occupies residues 1 to 18 (MSGLGILVLTLLLLVYMA). The propeptide occupies 19–44 (TSHQDAGEKQATQRDAINVRRRRSLT). 3 cysteine pairs are disulfide-bonded: Cys51–Cys63, Cys55–Cys71, and Cys62–Cys75. Phe76 bears the Phenylalanine amide mark.

Belongs to the conotoxin O3 superfamily. In terms of tissue distribution, expressed by the venom duct.

Its subcellular location is the secreted. The chain is Conotoxin ArMSGL-0141 from Conus arenatus (Sand-dusted cone).